The chain runs to 346 residues: uncharacterized protein (346 aa).

The interval 10-109 is disordered; the sequence is WDFIMTDPSS…SNSNGNNSPV (100 aa). Residues 26–44 show a composition bias toward low complexity; that stretch reads KGSSKNGSPKTSSPKSGSP. Over residues 56 to 67 the composition is skewed to polar residues; the sequence is NQQLLQNDSINL. The segment covering 94 to 109 has biased composition (low complexity); it reads KSSVVPSNSNGNNSPV.

This is an uncharacterized protein from Dictyostelium discoideum (Social amoeba).